Reading from the N-terminus, the 100-residue chain is MATIVDPRDIILAPVISEKSYALLDDNVYTFVVHPDSNKTQIKIAIEKIFAVKVASVNTANRQGKRKRTRTGYGKRKSTKRAIVTLAPGSKPIDLFGAPA.

This sequence belongs to the universal ribosomal protein uL23 family. In terms of assembly, part of the 50S ribosomal subunit. Contacts protein L29, and trigger factor when it is bound to the ribosome.

Functionally, one of the early assembly proteins it binds 23S rRNA. One of the proteins that surrounds the polypeptide exit tunnel on the outside of the ribosome. Forms the main docking site for trigger factor binding to the ribosome. This Mycobacterium marinum (strain ATCC BAA-535 / M) protein is Large ribosomal subunit protein uL23.